The primary structure comprises 82 residues: ATP synthase subunit c, chloroplastic (82 aa).

2 helical membrane-spanning segments follow: residues 3–23 and 57–77; these read PIIS…AAIG and LAFM…LLFA.

Belongs to the ATPase C chain family. In terms of assembly, F-type ATPases have 2 components, F(1) - the catalytic core - and F(0) - the membrane proton channel. F(1) has five subunits: alpha(3), beta(3), gamma(1), delta(1), epsilon(1). F(0) has four main subunits: a(1), b(1), b'(1) and c(10-14). The alpha and beta chains form an alternating ring which encloses part of the gamma chain. F(1) is attached to F(0) by a central stalk formed by the gamma and epsilon chains, while a peripheral stalk is formed by the delta, b and b' chains.

Its subcellular location is the plastid. It localises to the chloroplast thylakoid membrane. Its function is as follows. F(1)F(0) ATP synthase produces ATP from ADP in the presence of a proton or sodium gradient. F-type ATPases consist of two structural domains, F(1) containing the extramembraneous catalytic core and F(0) containing the membrane proton channel, linked together by a central stalk and a peripheral stalk. During catalysis, ATP synthesis in the catalytic domain of F(1) is coupled via a rotary mechanism of the central stalk subunits to proton translocation. In terms of biological role, key component of the F(0) channel; it plays a direct role in translocation across the membrane. A homomeric c-ring of between 10-14 subunits forms the central stalk rotor element with the F(1) delta and epsilon subunits. This is ATP synthase subunit c, chloroplastic from Cyanidium caldarium (Red alga).